The primary structure comprises 816 residues: Leucine--tRNA ligase (816 aa).

Residues 40–51 carry the 'HIGH' region motif; sequence SYPSGSQLHAGH. Positions 576-580 match the 'KMSKS' region motif; the sequence is KMSKS. K579 provides a ligand contact to ATP.

It belongs to the class-I aminoacyl-tRNA synthetase family.

The protein resides in the cytoplasm. It catalyses the reaction tRNA(Leu) + L-leucine + ATP = L-leucyl-tRNA(Leu) + AMP + diphosphate. In Clostridium perfringens (strain 13 / Type A), this protein is Leucine--tRNA ligase.